Reading from the N-terminus, the 415-residue chain is Maltose excess protein 1, chloroplastic (415 aa).

The segment at 74–93 (SESDSDSDFPHENQQGNPGL) is disordered. 9 helical membrane-spanning segments follow: residues 139 to 159 (ALSA…LSLL), 176 to 196 (LGVV…AMPI), 199 to 219 (FVAT…YYFG), 231 to 251 (DVIT…TFVP), 252 to 272 (LVPN…AAII), 286 to 306 (FVGS…PVSQ), 322 to 342 (SITM…ALFI), 345 to 365 (LMWL…NILC), and 373 to 393 (SQSF…LALW).

In terms of tissue distribution, expressed in leaves and roots. Expressed in root cap cells.

Its subcellular location is the plastid. The protein resides in the chloroplast inner membrane. Its function is as follows. Probable maltose transporter. Essential for the conversion of starch to sucrose in leaves at night, probably via the export of maltose from the chloroplast. Required for root cap cells formation. This is Maltose excess protein 1, chloroplastic (MEX1) from Arabidopsis thaliana (Mouse-ear cress).